Reading from the N-terminus, the 97-residue chain is UPF0235 protein cbdbA1230 (97 aa).

Belongs to the UPF0235 family.

This is UPF0235 protein cbdbA1230 from Dehalococcoides mccartyi (strain CBDB1).